The sequence spans 208 residues: Protein-L-isoaspartate O-methyltransferase (208 aa).

The active site involves serine 59.

Belongs to the methyltransferase superfamily. L-isoaspartyl/D-aspartyl protein methyltransferase family.

The protein localises to the cytoplasm. The catalysed reaction is [protein]-L-isoaspartate + S-adenosyl-L-methionine = [protein]-L-isoaspartate alpha-methyl ester + S-adenosyl-L-homocysteine. Functionally, catalyzes the methyl esterification of L-isoaspartyl residues in peptides and proteins that result from spontaneous decomposition of normal L-aspartyl and L-asparaginyl residues. It plays a role in the repair and/or degradation of damaged proteins. The polypeptide is Protein-L-isoaspartate O-methyltransferase (Escherichia fergusonii (strain ATCC 35469 / DSM 13698 / CCUG 18766 / IAM 14443 / JCM 21226 / LMG 7866 / NBRC 102419 / NCTC 12128 / CDC 0568-73)).